A 283-amino-acid chain; its full sequence is Pantothenate synthetase (283 aa).

30–37 (MGNLHAGH) contacts ATP. Catalysis depends on histidine 37, which acts as the Proton donor. Residue glutamine 61 coordinates (R)-pantoate. Glutamine 61 contributes to the beta-alanine binding site. An ATP-binding site is contributed by 149 to 152 (GEKD). Glutamine 155 serves as a coordination point for (R)-pantoate. ATP is bound by residues valine 178 and 186–189 (LSSR).

Belongs to the pantothenate synthetase family. As to quaternary structure, homodimer.

The protein localises to the cytoplasm. It catalyses the reaction (R)-pantoate + beta-alanine + ATP = (R)-pantothenate + AMP + diphosphate + H(+). It functions in the pathway cofactor biosynthesis; (R)-pantothenate biosynthesis; (R)-pantothenate from (R)-pantoate and beta-alanine: step 1/1. Catalyzes the condensation of pantoate with beta-alanine in an ATP-dependent reaction via a pantoyl-adenylate intermediate. The chain is Pantothenate synthetase from Azotobacter vinelandii (strain DJ / ATCC BAA-1303).